The primary structure comprises 272 residues: 4-hydroxy-tetrahydrodipicolinate reductase (272 aa).

Residues 11–16 (GAGGRM) and glutamate 37 contribute to the NAD(+) site. An NADP(+)-binding site is contributed by arginine 38. NAD(+) is bound by residues 101 to 103 (GTT) and 125 to 128 (AANF). Histidine 158 acts as the Proton donor/acceptor in catalysis. A (S)-2,3,4,5-tetrahydrodipicolinate-binding site is contributed by histidine 159. Residue lysine 162 is the Proton donor of the active site. Position 168–169 (168–169 (GT)) interacts with (S)-2,3,4,5-tetrahydrodipicolinate.

It belongs to the DapB family. In terms of assembly, homotetramer.

It is found in the cytoplasm. It catalyses the reaction (S)-2,3,4,5-tetrahydrodipicolinate + NAD(+) + H2O = (2S,4S)-4-hydroxy-2,3,4,5-tetrahydrodipicolinate + NADH + H(+). The enzyme catalyses (S)-2,3,4,5-tetrahydrodipicolinate + NADP(+) + H2O = (2S,4S)-4-hydroxy-2,3,4,5-tetrahydrodipicolinate + NADPH + H(+). Its pathway is amino-acid biosynthesis; L-lysine biosynthesis via DAP pathway; (S)-tetrahydrodipicolinate from L-aspartate: step 4/4. Its function is as follows. Catalyzes the conversion of 4-hydroxy-tetrahydrodipicolinate (HTPA) to tetrahydrodipicolinate. This chain is 4-hydroxy-tetrahydrodipicolinate reductase, found in Edwardsiella ictaluri (strain 93-146).